The chain runs to 440 residues: SET domain-containing protein 4 (440 aa).

Residues methionine 1 to leucine 16 are compositionally biased toward basic residues. Residues methionine 1–glycine 24 form a disordered region. The region spanning serine 48 to glycine 273 is the SET domain. An S-adenosyl-L-methionine-binding site is contributed by tyrosine 272.

It belongs to the class V-like SAM-binding methyltransferase superfamily. SETD4 family. Forms a ternary complex with TBK1 and ZNF268; the interaction with TBK1 is ZNF268-dependent and leads to TBK1 monomethylation.

The protein localises to the cytoplasm. It localises to the cytosol. The protein resides in the nucleus. It catalyses the reaction L-lysyl(4)-[histone H3] + S-adenosyl-L-methionine = N(6)-methyl-L-lysyl(4)-[histone H3] + S-adenosyl-L-homocysteine + H(+). The enzyme catalyses N(6)-methyl-L-lysyl(4)-[histone H3] + S-adenosyl-L-methionine = N(6),N(6)-dimethyl-L-lysyl(4)-[histone H3] + S-adenosyl-L-homocysteine + H(+). It carries out the reaction L-lysyl(20)-[histone H4] + S-adenosyl-L-methionine = N(6)-methyl-L-lysyl(20)-[histone H4] + S-adenosyl-L-homocysteine + H(+). The catalysed reaction is N(6)-methyl-L-lysyl(20)-[histone H4] + S-adenosyl-L-methionine = N(6),N(6)-dimethyl-L-lysyl(20)-[histone H4] + S-adenosyl-L-homocysteine + H(+). It catalyses the reaction N(6),N(6)-dimethyl-L-lysyl(20)-[histone H4] + S-adenosyl-L-methionine = N(6),N(6),N(6)-trimethyl-L-lysyl(20)-[histone H4] + S-adenosyl-L-homocysteine + H(+). The enzyme catalyses L-lysyl-[protein] + S-adenosyl-L-methionine = N(6)-methyl-L-lysyl-[protein] + S-adenosyl-L-homocysteine + H(+). Protein-lysine N-methyltransferase that methylates both histones and non-histone proteins. Via its catalytic activity, regulates many processes, including cell proliferation, cell differentiation, inflammatory response and apoptosis. Regulates the inflammatory response by mediating mono- and dimethylation of 'Lys-4' of histone H3 (H3K4me1 and H3K4me2, respectively), leading to activate the transcription of pro-inflammatory cytokines IL6 and TNF-alpha. Through the catalysis of TBK1 monomethylation, may regulate virus-induced interferon signaling. TBK1 monomethylation enhances its interaction with MAVS, STING and IRF3, hence promoting antiviral interferon signaling. Also involved in the regulation of stem cell quiescence by catalyzing the trimethylation of 'Lys-20' of histone H4 (H4K20me3), thereby promoting heterochromatin formation. In the brain, epigenetically controls quiescence of neural stem cells for sustaining a protected neural stem cell population and maintaining a stem cell reservoir for neurogenesis. Involved in proliferation, migration, paracrine and myogenic differentiation of bone marrow mesenchymal stem cells (BMSCs). Through the catalysis of XRCC5/Ku70 trimethylation, regulates BAX-mediated apoptosis. SETD4-catalyzed XRCC5 methylation results in XRCC5 translocation to the cytoplasm, where it interacts with BAX, sequestering it from the mitochondria, hence preventing BAX-mediated apoptosis. The sequence is that of SET domain-containing protein 4 from Homo sapiens (Human).